A 143-amino-acid chain; its full sequence is MHIEHISGETVGEVRIVSDMHERKATMAQEAGAFIALLGERYETMEELLEMITWAQLGIHKKTVGLLNVDGYYNNLLAFFDTGVEEGFIKQGACNIVVSAPSARELMEKMELYTPSHKYIASHQSWKVEPLGDYPLLNENKPQ.

Residues 23-24 (RK), 41-47 (RYETMEE), and T53 contribute to the substrate site.

This sequence belongs to the LOG family.

It carries out the reaction N(6)-(dimethylallyl)adenosine 5'-phosphate + H2O = N(6)-dimethylallyladenine + D-ribose 5-phosphate. The catalysed reaction is 9-ribosyl-trans-zeatin 5'-phosphate + H2O = trans-zeatin + D-ribose 5-phosphate. Its function is as follows. Cytokinin-activating enzyme working in the direct activation pathway. Phosphoribohydrolase that converts inactive cytokinin nucleotides to the biologically active free-base forms. The polypeptide is Putative cytokinin riboside 5'-monophosphate phosphoribohydrolase LOG9 (LOG9) (Arabidopsis thaliana (Mouse-ear cress)).